We begin with the raw amino-acid sequence, 88 residues long: Parvalbumin beta 3 (88 aa).

Ala-1 bears the N-acetylalanine mark. An EF-hand domain is found at 31–66 (KSPEEVKKFFAIIDQDHSGFIEEEELKLFLQTFSAG). The Ca(2+) site is built by Asp-44, Asp-46, Ser-48, Phe-50, Glu-52, Glu-55, and Glu-81.

Belongs to the parvalbumin family.

Its function is as follows. In muscle, parvalbumin is thought to be involved in relaxation after contraction. It binds two calcium ions. This Merluccius productus (North Pacific hake) protein is Parvalbumin beta 3.